The chain runs to 713 residues: Phenylalanine--tRNA ligase beta subunit (713 aa).

In terms of domain architecture, tRNA-binding spans 39–153 (IRHVENIKYG…EANLNEDPIA (115 aa)). The 76-residue stretch at 379 to 454 (LKPKEILFDH…RFYGYDNFPI (76 aa)) folds into the B5 domain. The Mg(2+) site is built by D432, D438, E441, and E442.

Belongs to the phenylalanyl-tRNA synthetase beta subunit family. Type 1 subfamily. As to quaternary structure, tetramer of two alpha and two beta subunits. It depends on Mg(2+) as a cofactor.

The protein localises to the cytoplasm. It catalyses the reaction tRNA(Phe) + L-phenylalanine + ATP = L-phenylalanyl-tRNA(Phe) + AMP + diphosphate + H(+). This chain is Phenylalanine--tRNA ligase beta subunit, found in Mycoplasma mobile (strain ATCC 43663 / 163K / NCTC 11711) (Mesomycoplasma mobile).